Consider the following 468-residue polypeptide: 6-phospho-beta-galactosidase (468 aa).

Residues Gln-19, His-116, Asn-159, Glu-160, and Asn-297 each contribute to the D-galactose 6-phosphate site. Glu-160 acts as the Proton donor in catalysis. The active-site Nucleophile is Glu-375. D-galactose 6-phosphate-binding residues include Ser-428, Trp-429, Lys-435, and Tyr-437.

This sequence belongs to the glycosyl hydrolase 1 family.

It catalyses the reaction a 6-phospho-beta-D-galactoside + H2O = D-galactose 6-phosphate + an alcohol. The protein operates within carbohydrate metabolism; lactose degradation; D-galactose 6-phosphate and beta-D-glucose from lactose 6-phosphate: step 1/1. The protein is 6-phospho-beta-galactosidase of Lactococcus lactis subsp. lactis (Streptococcus lactis).